A 375-amino-acid polypeptide reads, in one-letter code: tRNA-specific 2-thiouridylase MnmA (375 aa).

ATP contacts are provided by residues 8-15 (GLSGGVDS) and M34. Positions 104-106 (NPD) are interaction with target base in tRNA. C109 acts as the Nucleophile in catalysis. An intrachain disulfide couples C109 to C208. G134 contacts ATP. The tract at residues 158-160 (KDQ) is interaction with tRNA. C208 (cysteine persulfide intermediate) is an active-site residue. The interval 321 to 322 (RY) is interaction with tRNA.

It belongs to the MnmA/TRMU family.

The protein localises to the cytoplasm. The enzyme catalyses S-sulfanyl-L-cysteinyl-[protein] + uridine(34) in tRNA + AH2 + ATP = 2-thiouridine(34) in tRNA + L-cysteinyl-[protein] + A + AMP + diphosphate + H(+). Catalyzes the 2-thiolation of uridine at the wobble position (U34) of tRNA, leading to the formation of s(2)U34. The protein is tRNA-specific 2-thiouridylase MnmA of Mycoplasma mycoides subsp. mycoides SC (strain CCUG 32753 / NCTC 10114 / PG1).